The following is a 410-amino-acid chain: MSLPHLSLADARNLHLAAQGLLNKPRRRASLEDIPATISRMSLLQIDTINIVARSPYLVLFSRLGNYPAQWLDESLARGELMEYWAHEACFMPRSDFRLIRHRMLAPEKMGWKYKDAWMQEHEAEIAQLIQHIHDKGPVRSADFEHPRKGASGWWEWKPHKRHLEGLFTAGKVMVIERRNFQRVYDLTHRVMPDWDDERDLVSQTEAEIIMLDNSARSLGIFREQWLADYYRLKRPALAAWREARAEQQQIIAVHVEKLGNLWLHDDLLPLLERALAGKLTATHSAVLSPFDPVVWDRKRAEQLFDFSYRLECYTPAPKRQYGYFVLPLLHRGQLVGRMDAKMHRQTGILEVISLWLQEGIKPTTTLQKGLRQAITDFANWQQATRVTLGCCPQGLFTDCRTGWEIDPVA.

The short motif at 45–47 is the QXD; important for activity element; that stretch reads QID.

The protein belongs to the DNA glycosylase AlkZ-like family.

Functionally, DNA glycosylase involved in the repair of interstrand DNA cross-links (ICLs), which are highly toxic DNA lesions that covalently tether the opposing strands of DNA, thereby inhibiting essential cellular processes such as DNA replication and transcription. Acts by unhooking both sides of the ICLs, forming abasic (AP) sites on both strands. Unhooks ICLs derived from various cross-linking agents, including azinomycin B (AZB) and mechlorethamine, also known as nitrogen mustard (NM), protecting cells from the toxicity of these cross-linking agents. In vitro, also acts on monoadducts and can catalyze the excision of N7-methylguanine (7mGua) from an oligonucleotide containing N7-methyldeoxyguanosine (d7mG). Shows no unhooking activity toward FaPy-ICLs. The protein is Interstrand DNA cross-link repair glycosylase (ycaQ) of Escherichia coli (strain K12).